Reading from the N-terminus, the 128-residue chain is CD59 glycoprotein (128 aa).

Residues 1–25 (MGIQGGSVLFGLLLILAVFCHSGHS) form the signal peptide. The 83-residue stretch at 26–108 (LQCYSCPYST…ILENGGTTLS (83 aa)) folds into the UPAR/Ly6 domain. 5 disulfides stabilise this stretch: cysteine 28/cysteine 51, cysteine 31/cysteine 38, cysteine 44/cysteine 64, cysteine 70/cysteine 88, and cysteine 89/cysteine 94. Asparagine 43 carries N-linked (GlcNAc...) asparagine glycosylation. Residue asparagine 102 is the site of GPI-anchor amidated asparagine attachment. A propeptide spans 103–128 (GGTTLSKKTVLLLVTPFLAAAWSLHP) (removed in mature form).

As to quaternary structure, interacts with T-cell surface antigen CD2. In terms of processing, N- and O-glycosylated.

It localises to the cell membrane. Its subcellular location is the secreted. In terms of biological role, potent inhibitor of the complement membrane attack complex (MAC) action, which protects self-cells from damage during complement activation. Acts by binding to the beta-haipins of C8 (C8A and C8B) components of the assembling MAC, forming an intermolecular beta-sheet that prevents incorporation of the multiple copies of C9 required for complete formation of the osmolytic pore. This Callithrix sp. (Marmoset) protein is CD59 glycoprotein.